The chain runs to 688 residues: Polyribonucleotide nucleotidyltransferase (688 aa).

Mg(2+) contacts are provided by Asp484 and Asp490. The 60-residue stretch at 550-609 (PTTEIFNVAPDKIVEIIGQGGRVIKEIVEKFEVKIDLNKPSGEVKIMGNKERVLKTKEFI) folds into the KH domain. The S1 motif domain maps to 626–688 (DEVLEAQVKR…NKGKIALDLA (63 aa)).

This sequence belongs to the polyribonucleotide nucleotidyltransferase family. Mg(2+) is required as a cofactor.

The protein resides in the cytoplasm. The enzyme catalyses RNA(n+1) + phosphate = RNA(n) + a ribonucleoside 5'-diphosphate. Involved in mRNA degradation. Catalyzes the phosphorolysis of single-stranded polyribonucleotides processively in the 3'- to 5'-direction. This chain is Polyribonucleotide nucleotidyltransferase, found in Helicobacter pylori (strain ATCC 700392 / 26695) (Campylobacter pylori).